Here is a 250-residue protein sequence, read N- to C-terminus: MATHTEQLTRPAVRLQGLTRSFADRTVLDGIDLDLPAGQFTALLGHSGSGKSTLLRAVAGLDHEVTGSGQLTAPERVSVVFQDSRLLPWRRVLDNVLLGTDGKEAAERGRAALAEVGLAGRERAWPGELSGGEAQRAALARSLVREPELLLADEPFGALDALTRIRMHTLLRELWERHRPSVLLVTHDVDEAIVLADRVLVLERGRIGLDLTIDRPHPRSYRDPLLGEYRERLLTALGVTEHQGAQEDHQ.

The region spanning 13-229 (VRLQGLTRSF…SYRDPLLGEY (217 aa)) is the ABC transporter domain. 45–52 (GHSGSGKS) is a binding site for ATP.

Belongs to the ABC transporter superfamily. Aliphatic sulfonates importer (TC 3.A.1.17.2) family. The complex is composed of two ATP-binding proteins (SsuB), two transmembrane proteins (SsuC) and a solute-binding protein (SsuA).

The protein localises to the cell membrane. It carries out the reaction ATP + H2O + aliphatic sulfonate-[sulfonate-binding protein]Side 1 = ADP + phosphate + aliphatic sulfonateSide 2 + [sulfonate-binding protein]Side 1.. Part of the ABC transporter complex SsuABC involved in aliphatic sulfonates import. Responsible for energy coupling to the transport system. In Streptomyces avermitilis (strain ATCC 31267 / DSM 46492 / JCM 5070 / NBRC 14893 / NCIMB 12804 / NRRL 8165 / MA-4680), this protein is Aliphatic sulfonates import ATP-binding protein SsuB 2.